The sequence spans 254 residues: Alcohol dehydrogenase (254 aa).

10 to 33 (FVAGLGGIGLDTSREIVKSGPKNL) lines the NAD(+) pocket. Serine 138 contributes to the substrate binding site. Tyrosine 151 functions as the Proton acceptor in the catalytic mechanism.

It belongs to the short-chain dehydrogenases/reductases (SDR) family. Homodimer.

It catalyses the reaction a primary alcohol + NAD(+) = an aldehyde + NADH + H(+). The catalysed reaction is a secondary alcohol + NAD(+) = a ketone + NADH + H(+). The polypeptide is Alcohol dehydrogenase (Adh) (Drosophila borealis (Fruit fly)).